We begin with the raw amino-acid sequence, 194 residues long: Translation machinery-associated protein 22 (194 aa).

Residues 102–173 enclose the SUI1 domain; it reads VQIKRVERNK…DVQDWLLEVY (72 aa).

This sequence belongs to the DENR family. In terms of assembly, interacts with the 40S ribosomal subunit.

It localises to the cytoplasm. The sequence is that of Translation machinery-associated protein 22 (tma22) from Aspergillus oryzae (strain ATCC 42149 / RIB 40) (Yellow koji mold).